Consider the following 339-residue polypeptide: Phenylalanine--tRNA ligase alpha subunit (339 aa).

Mg(2+) is bound at residue E254.

The protein belongs to the class-II aminoacyl-tRNA synthetase family. Phe-tRNA synthetase alpha subunit type 1 subfamily. In terms of assembly, tetramer of two alpha and two beta subunits. It depends on Mg(2+) as a cofactor.

The protein localises to the cytoplasm. The enzyme catalyses tRNA(Phe) + L-phenylalanine + ATP = L-phenylalanyl-tRNA(Phe) + AMP + diphosphate + H(+). This chain is Phenylalanine--tRNA ligase alpha subunit, found in Lachnoclostridium phytofermentans (strain ATCC 700394 / DSM 18823 / ISDg) (Clostridium phytofermentans).